A 3430-amino-acid chain; its full sequence is Genome polyprotein (3430 aa).

The segment at serine 2–asparagine 15 is interaction with host EXOC1. Residues serine 2–arginine 105 are Cytoplasmic-facing. The tract at residues leucine 37–valine 72 is hydrophobic; homodimerization of capsid protein C. A propeptide spans glycine 106–alanine 123 (ER anchor for the capsid protein C, removed in mature form by serine protease NS3). A helical membrane pass occupies residues glycine 106 to leucine 126. Residues serine 127 to glutamate 248 lie on the Extracellular side of the membrane. The N-linked (GlcNAc...) asparagine; by host glycan is linked to asparagine 138. The chain crosses the membrane as a helical span at residues serine 249 to glycine 269. Residues serine 270 to arginine 275 are Cytoplasmic-facing. The chain crosses the membrane as a helical span at residues valine 276–serine 290. At phenylalanine 291 to leucine 739 the chain is on the extracellular side. 6 cysteine pairs are disulfide-bonded: cysteine 293–cysteine 320, cysteine 350–cysteine 406, cysteine 364–cysteine 395, cysteine 382–cysteine 411, cysteine 476–cysteine 574, and cysteine 591–cysteine 622. The segment at aspartate 388–glycine 401 is fusion peptide. The helical transmembrane segment at phenylalanine 740 to isoleucine 760 threads the bilayer. Residues asparagine 761–serine 766 are Cytoplasmic-facing. The chain crosses the membrane as a helical span at residues isoleucine 767–alanine 787. Topologically, residues aspartate 788–aspartate 1212 are extracellular. 2 disulfides stabilise this stretch: cysteine 791–cysteine 802 and cysteine 842–cysteine 930. N-linked (GlcNAc...) asparagine; by host glycosylation is found at asparagine 917, asparagine 962, and asparagine 994. Cystine bridges form between cysteine 966–cysteine 1010, cysteine 1067–cysteine 1116, cysteine 1078–cysteine 1099, and cysteine 1100–cysteine 1103. A helical transmembrane segment spans residues valine 1213–phenylalanine 1233. The Cytoplasmic portion of the chain corresponds to leucine 1234–serine 1243. A helical membrane pass occupies residues isoleucine 1244–leucine 1264. Over serine 1265 to alanine 1278 the chain is Lumenal. A helical transmembrane segment spans residues tryptophan 1279–alanine 1299. The Cytoplasmic portion of the chain corresponds to leucine 1300–cysteine 1307. The chain crosses the membrane as a helical span at residues leucine 1308–glutamate 1328. At lysine 1329–cysteine 1340 the chain is on the lumenal side. The helical transmembrane segment at leucine 1341–leucine 1361 threads the bilayer. The Cytoplasmic segment spans residues methionine 1362–glycine 1371. The chain crosses the membrane as a helical span at residues tryptophan 1372–alanine 1392. Topologically, residues glutamate 1393–aspartate 1395 are lumenal. The helical transmembrane segment at isoleucine 1396–serine 1416 threads the bilayer. At glycine 1417–alanine 1473 the chain is on the cytoplasmic side. The tract at residues isoleucine 1424–alanine 1463 is interacts with and activates NS3 protease. Positions cysteine 1474 to isoleucine 1494 form an intramembrane region, helical. Residues threonine 1495–alanine 2170 lie on the Cytoplasmic side of the membrane. Positions glycine 1502–glycine 1679 constitute a Peptidase S7 domain. Residues histidine 1552, aspartate 1576, and serine 1636 each act as charge relay system; for serine protease NS3 activity in the active site. The region spanning proline 1682–glutamine 1838 is the Helicase ATP-binding domain. Residues arginine 1686–glutamine 1689 form an important for RNA-binding region. Leucine 1695–threonine 1702 serves as a coordination point for ATP. Residues aspartate 1786–histidine 1789 carry the DEAH box motif. The Helicase C-terminal domain maps to glycine 1849 to glutamate 2014. Lysine 1890 carries the N6-acetyllysine; by host modification. A regulates the ATPase activity of NS3 helicase region spans residues glutamate 2165 to aspartate 2169. Residues leucine 2171–leucine 2191 traverse the membrane as a helical segment. Residues methionine 2192 to glycine 2196 lie on the Lumenal side of the membrane. Positions isoleucine 2197–alanine 2217 form an intramembrane region, helical. A topological domain (lumenal) is located at residue glutamate 2218. Residues valine 2219 to isoleucine 2239 traverse the membrane as a helical segment. The Cytoplasmic portion of the chain corresponds to proline 2240–alanine 2254. Residues valine 2255–leucine 2275 traverse the membrane as a helical segment. Residues aspartate 2276–alanine 2309 are Lumenal-facing. An intramembrane region (helical) is located at residues threonine 2310 to isoleucine 2330. Over threonine 2331–threonine 2377 the chain is Lumenal. The helical transmembrane segment at leucine 2378 to glycine 2398 threads the bilayer. Topologically, residues tryptophan 2399 to lysine 2441 are cytoplasmic. A helical transmembrane segment spans residues lysine 2442–valine 2462. At arginine 2463 to glutamate 2467 the chain is on the lumenal side. Residues alanine 2468–tryptophan 2488 traverse the membrane as a helical segment. Topologically, residues asparagine 2489–leucine 3430 are cytoplasmic. The mRNA cap 0-1 NS5-type MT domain occupies glycine 2526–alanine 2791. Residue serine 2581 participates in S-adenosyl-L-methionine binding. Position 2581 is a phosphoserine (serine 2581). The active-site For 2'-O-MTase activity is the lysine 2586. Residues glycine 2611, tryptophan 2612, threonine 2629, lysine 2630, aspartate 2656, and valine 2657 each contribute to the S-adenosyl-L-methionine site. Aspartate 2671 serves as the catalytic For 2'-O-MTase activity. Isoleucine 2672 serves as a coordination point for S-adenosyl-L-methionine. Catalysis depends on for 2'-O-MTase activity residues lysine 2707 and glutamate 2743. Tyrosine 2745 is a binding site for S-adenosyl-L-methionine. The short motif at arginine 2914 to lysine 2916 is the Nuclear localization signal element. Zn(2+)-binding residues include glutamate 2965, histidine 2969, cysteine 2974, and cysteine 2977. The RdRp catalytic domain occupies glycine 3055–serine 3207. Positions 3242, 3258, and 3377 each coordinate Zn(2+). Residues threonine 3428 to leucine 3430 carry the PDZ-binding motif.

In the N-terminal section; belongs to the class I-like SAM-binding methyltransferase superfamily. mRNA cap 0-1 NS5-type methyltransferase family. As to quaternary structure, homodimer. Interacts (via N-terminus) with host EXOC1 (via C-terminus); this interaction results in EXOC1 degradation through the proteasome degradation pathway. Interacts with host DDX56; this interaction plays an important role in genomic RNA encapsidation. Forms heterodimers with envelope protein E in the endoplasmic reticulum and Golgi. In terms of assembly, homodimer; in the endoplasmic reticulum and Golgi. As to quaternary structure, homodimer; Homohexamer when secreted. Interacts with envelope protein E. NS1 interacts with NS4B. Interacts with host complement protein CFH; this interaction leads to the degradation of C3. Interacts (via N-terminus) with serine protease NS3. In terms of assembly, forms a heterodimer with serine protease NS3. May form homooligomers. As to quaternary structure, forms a heterodimer with NS2B. Interacts with NS4B. Interacts with unphosphorylated RNA-directed RNA polymerase NS5; this interaction stimulates RNA-directed RNA polymerase NS5 guanylyltransferase activity. Interacts with Serine protease/Helicase NS3. Interacts with NS1. In terms of assembly, homodimer. Interacts with host STAT2; this interaction inhibits the phosphorylation of the latter, and, when all viral proteins are present (polyprotein), targets STAT2 for degradation. Interacts with host PAF1 complex. Post-translationally, specific enzymatic cleavages in vivo yield mature proteins. Cleavages in the lumen of endoplasmic reticulum are performed by host signal peptidase, whereas cleavages in the cytoplasmic side are performed by serine protease NS3. Signal cleavage at the 2K-4B site requires a prior NS3 protease-mediated cleavage at the 4A-2K site. Cleaved in post-Golgi vesicles by a host furin, releasing the mature small envelope protein M, and peptide pr. This cleavage is incomplete as up to 30% of viral particles still carry uncleaved prM. In terms of processing, not N-glycosylated. Post-translationally, N-glycosylated. The excreted form is glycosylated and this is required for efficient secretion of the protein from infected cells. Acetylated by host KAT5. Acetylation modulates NS3 RNA-binding and unwinding activities and plays an important positive role for viral replication. In terms of processing, phosphorylated on serines residues. This phosphorylation may trigger NS5 nuclear localization.

It localises to the virion. The protein resides in the host nucleus. Its subcellular location is the host cytoplasm. The protein localises to the host perinuclear region. It is found in the secreted. It localises to the virion membrane. The protein resides in the host endoplasmic reticulum membrane. The enzyme catalyses Selective hydrolysis of -Xaa-Xaa-|-Yaa- bonds in which each of the Xaa can be either Arg or Lys and Yaa can be either Ser or Ala.. The catalysed reaction is RNA(n) + a ribonucleoside 5'-triphosphate = RNA(n+1) + diphosphate. It carries out the reaction a ribonucleoside 5'-triphosphate + H2O = a ribonucleoside 5'-diphosphate + phosphate + H(+). It catalyses the reaction ATP + H2O = ADP + phosphate + H(+). The enzyme catalyses a 5'-end (5'-triphosphoguanosine)-ribonucleoside in mRNA + S-adenosyl-L-methionine = a 5'-end (N(7)-methyl 5'-triphosphoguanosine)-ribonucleoside in mRNA + S-adenosyl-L-homocysteine. The catalysed reaction is a 5'-end (N(7)-methyl 5'-triphosphoguanosine)-ribonucleoside in mRNA + S-adenosyl-L-methionine = a 5'-end (N(7)-methyl 5'-triphosphoguanosine)-(2'-O-methyl-ribonucleoside) in mRNA + S-adenosyl-L-homocysteine + H(+). Functionally, plays a role in virus budding by binding to the cell membrane and gathering the viral RNA into a nucleocapsid that forms the core of a mature virus particle. During virus entry, may induce genome penetration into the host cytoplasm after hemifusion induced by the surface proteins. Can migrate to the cell nucleus where it modulates host functions. Overcomes the anti-viral effects of host EXOC1 by sequestering and degrading the latter through the proteasome degradation pathway. Inhibits RNA silencing by interfering with host Dicer. In terms of biological role, prevents premature fusion activity of envelope proteins in trans-Golgi by binding to envelope protein E at pH6.0. After virion release in extracellular space, gets dissociated from E dimers. Its function is as follows. Acts as a chaperone for envelope protein E during intracellular virion assembly by masking and inactivating envelope protein E fusion peptide. prM is the only viral peptide matured by host furin in the trans-Golgi network probably to avoid catastrophic activation of the viral fusion activity in acidic Golgi compartment prior to virion release. prM-E cleavage is inefficient, and many virions are only partially matured. These uncleaved prM would play a role in immune evasion. Functionally, may play a role in virus budding. Exerts cytotoxic effects by activating a mitochondrial apoptotic pathway through M ectodomain. May display a viroporin activity. Binds to host cell surface receptor and mediates fusion between viral and cellular membranes. Envelope protein is synthesized in the endoplasmic reticulum in the form of heterodimer with protein prM. They play a role in virion budding in the ER, and the newly formed immature particle is covered with 60 spikes composed of heterodimer between precursor prM and envelope protein E. The virion is transported to the Golgi apparatus where the low pH causes dissociation of PrM-E heterodimers and formation of E homodimers. prM-E cleavage is inefficient, and many virions are only partially matured. These uncleaved prM would play a role in immune evasion. In terms of biological role, involved in immune evasion, pathogenesis and viral replication. Once cleaved off the polyprotein, is targeted to three destinations: the viral replication cycle, the plasma membrane and the extracellular compartment. Essential for viral replication. Required for formation of the replication complex and recruitment of other non-structural proteins to the ER-derived membrane structures. Excreted as a hexameric lipoparticle that plays a role against host immune response. Antagonizing the complement function. Binds to the host macrophages and dendritic cells. Inhibits signal transduction originating from Toll-like receptor 3 (TLR3). Its function is as follows. Component of the viral RNA replication complex that functions in virion assembly and antagonizes the host alpha/beta interferon antiviral response. Functionally, required cofactor for the serine protease function of NS3. May have membrane-destabilizing activity and form viroporins. Displays three enzymatic activities: serine protease, NTPase and RNA helicase. NS3 serine protease, in association with NS2B, performs its autocleavage and cleaves the polyprotein at dibasic sites in the cytoplasm: C-prM, NS2A-NS2B, NS2B-NS3, NS3-NS4A, NS4A-2K and NS4B-NS5. NS3 RNA helicase binds RNA and unwinds dsRNA in the 3' to 5' direction. NS3 supports the separation of RNA daughter and template strands during viral replication. The helicase part is involved in the inhibition of phosphorylation of host STAT1, and thereby inhibition of host type-I IFN signaling. In addition, NS3 assists the initiation of replication by unwinding the RNA secondary structure in the 3' non-translated region (NTR). Inhibits STAT2 translocation in the nucleus after IFN-alpha treatment. In terms of biological role, regulates the ATPase activity of the NS3 helicase activity. NS4A allows NS3 helicase to conserve energy during unwinding. Its function is as follows. Functions as a signal peptide for NS4B and is required for the interferon antagonism activity of the latter. Functionally, induces the formation of ER-derived membrane vesicles where the viral replication takes place. Inhibits interferon (IFN)-induced host STAT1 phosphorylation and nuclear translocation, thereby preventing the establishment of cellular antiviral state by blocking the IFN-alpha/beta pathway. Inhibits STAT2 translocation in the nucleus after IFN-alpha treatment. Replicates the viral (+) and (-) RNA genome, and performs the capping of genomes in the cytoplasm. NS5 methylates viral RNA cap at guanine N-7 and ribose 2'-O positions. Besides its role in RNA genome replication, also prevents the establishment of cellular antiviral state by blocking the interferon-alpha/beta (IFN-alpha/beta) signaling pathway. Inhibits host TYK2 and STAT2 phosphorylation, thereby preventing activation of JAK-STAT signaling pathway. The polypeptide is Genome polyprotein (Aedes (Tropical bont tick)).